The following is a 260-amino-acid chain: DNA repair protein RecO (260 aa).

It belongs to the RecO family.

Its function is as follows. Involved in DNA repair and RecF pathway recombination. This is DNA repair protein RecO from Salinibacter ruber (strain DSM 13855 / M31).